Here is a 512-residue protein sequence, read N- to C-terminus: Tyrosine decarboxylase (512 aa).

L-tyrosine-binding residues include proline 100, histidine 205, and histidine 320. Position 321 is an N6-(pyridoxal phosphate)lysine (lysine 321). Residue tyrosine 350 coordinates L-tyrosine.

Belongs to the group II decarboxylase family. In terms of assembly, homodimer. Pyridoxal 5'-phosphate is required as a cofactor. Mainly expressed in roots, stems and capsule walls.

It catalyses the reaction L-tyrosine + H(+) = tyramine + CO2. Its function is as follows. Tyrosine decarboxylase that converts tyrosine into tyramine, a precursor of isoquinoline alkaloids and various amides. This Papaver somniferum (Opium poppy) protein is Tyrosine decarboxylase.